A 364-amino-acid chain; its full sequence is Probable 7-methylxanthine methyltransferase 5 (364 aa).

Residue tyrosine 19 coordinates S-adenosyl-L-homocysteine. Threonine 26 contributes to the theobromine binding site. Residues cysteine 64, glutamine 69, aspartate 101, leucine 102, serine 134, and phenylalanine 135 each coordinate S-adenosyl-L-homocysteine. 3 residues coordinate theobromine: tyrosine 152, histidine 155, and tryptophan 156. Residues asparagine 172, aspartate 258, phenylalanine 260, and asparagine 261 each contribute to the Mg(2+) site. Position 314 (phenylalanine 314) interacts with theobromine.

Belongs to the methyltransferase superfamily. Type-7 methyltransferase family. The cofactor is Mg(2+).

It catalyses the reaction 7-methylxanthine + S-adenosyl-L-methionine = theobromine + S-adenosyl-L-homocysteine + H(+). It functions in the pathway alkaloid biosynthesis. Its function is as follows. Involved in the biosynthesis of theobromine. This chain is Probable 7-methylxanthine methyltransferase 5, found in Theobroma cacao (Cacao).